We begin with the raw amino-acid sequence, 427 residues long: Serine hydroxymethyltransferase (427 aa).

120–122 (GHI) serves as a coordination point for (6S)-5,6,7,8-tetrahydrofolate. Position 226 is an N6-(pyridoxal phosphate)lysine (lysine 226). Residue glutamate 243 coordinates (6S)-5,6,7,8-tetrahydrofolate.

The protein belongs to the SHMT family. In terms of assembly, homodimer. Requires pyridoxal 5'-phosphate as cofactor.

It is found in the cytoplasm. Its pathway is amino-acid biosynthesis; glycine biosynthesis; glycine from L-serine: step 1/1. Functionally, catalyzes the reversible interconversion of serine and glycine with a modified folate serving as the one-carbon carrier. Also exhibits a pteridine-independent aldolase activity toward beta-hydroxyamino acids, producing glycine and aldehydes, via a retro-aldol mechanism. This Thermococcus gammatolerans (strain DSM 15229 / JCM 11827 / EJ3) protein is Serine hydroxymethyltransferase.